The chain runs to 350 residues: LIM domain-containing protein unc-95 (350 aa).

Residues 1 to 37 (MTISPQPSHQQFESYQWTTESRSSQQRHGTGTPSQDG) are compositionally biased toward polar residues. The tract at residues 1–65 (MTISPQPSHQ…ESRNSNKDKV (65 aa)) is disordered. A compositionally biased stretch (basic and acidic residues) spans 45–65 (PVERHVARWRSESRNSNKDKV). The stretch at 83–110 (LTALKNDVEQTTEIIRRKQEQMRMERRQ) forms a coiled coil. Disordered regions lie at residues 177-198 (RRGQ…EIEY), 206-225 (PEEQ…METD), and 235-262 (MSEE…SGSP). Positions 268 to 334 (AVCAYCSEEI…HDCFYKLYNG (67 aa)) constitute an LIM zinc-binding domain.

Ubiquitinated. Ubiquitination by rnf-5 leads to dissociation from muscle dense bodies during molting and is required for ecdysis. As to expression, expressed in the body wall muscles, vulval muscles and the anal muscles. Expressed in the muscle arms of the head muscle cells that form neuromuscular junctions and in the anal depressor muscle.

The protein localises to the cytoplasm. It localises to the nucleus. It is found in the cell membrane. Its subcellular location is the myofibril. The protein resides in the sarcomere. The protein localises to the m line. It localises to the cell junction. It is found in the focal adhesion. Required for the assembly and integrity of muscle dense bodies, which establish the adhesion sites of the muscle cells to the extracellular matrix. Decreased localization of unc-95 to dense bodies and their subsequent dissociation plays an important role in ecdysis during molting. Involved in the organization of the muscle sarcomeric structure and thereby required for locomotion. In Caenorhabditis elegans, this protein is LIM domain-containing protein unc-95.